The following is a 298-amino-acid chain: Sulfate adenylyltransferase subunit 2 (298 aa).

Composition is skewed to basic and acidic residues over residues 272-282 (RTSERQGRLID) and 289-298 (MEKKKQEGYF). The interval 272–298 (RTSERQGRLIDSDSAGSMEKKKQEGYF) is disordered.

The protein belongs to the PAPS reductase family. CysD subfamily. In terms of assembly, heterodimer composed of CysD, the smaller subunit, and CysN.

It catalyses the reaction sulfate + ATP + H(+) = adenosine 5'-phosphosulfate + diphosphate. It participates in sulfur metabolism; hydrogen sulfide biosynthesis; sulfite from sulfate: step 1/3. In terms of biological role, with CysN forms the ATP sulfurylase (ATPS) that catalyzes the adenylation of sulfate producing adenosine 5'-phosphosulfate (APS) and diphosphate, the first enzymatic step in sulfur assimilation pathway. APS synthesis involves the formation of a high-energy phosphoric-sulfuric acid anhydride bond driven by GTP hydrolysis by CysN coupled to ATP hydrolysis by CysD. This Burkholderia lata (strain ATCC 17760 / DSM 23089 / LMG 22485 / NCIMB 9086 / R18194 / 383) protein is Sulfate adenylyltransferase subunit 2.